A 1487-amino-acid chain; its full sequence is Major viral transcription factor ICP4 homolog (1487 aa).

3 disordered regions span residues 41–295 (AAPD…LPPG), 310–370 (LAKT…AEEA), and 803–1007 (PPTR…HTPR). The segment covering 66–75 (VIPPPSPAPE) has biased composition (pro residues). Composition is skewed to low complexity over residues 165–193 (PSSA…SSSS) and 201–213 (DGAG…SSSS). Residues 214 to 224 (DDSDSDEGGEE) are compositionally biased toward acidic residues. Over residues 235-272 (AAKTPSAAGSPGPSSGGDRPAAGAATPKSCRSGAASPG) the composition is skewed to low complexity. Positions 273–285 (APAPAPASAPAPS) are enriched in pro residues. Composition is skewed to low complexity over residues 807–829 (SQQP…AEGS), 849–860 (PSSHSQSPQHSQ), and 867–877 (ATTATCCRATQ). A compositionally biased stretch (polar residues) spans 878 to 893 (TNARSRGQQHQPQKAR). Residues 920–929 (HGRPRGKSGK) are compositionally biased toward basic residues. Low complexity predominate over residues 938 to 951 (AAQAGASASFSSSA). Over residues 988-1007 (GPDRRGGFRRVPRGDCHTPR) the composition is skewed to basic and acidic residues.

This sequence belongs to the herpesviridae ICP4 family. Post-translationally, a long stretch of serine residues may be a major site of phosphorylation.

The protein resides in the host nucleus. Functionally, this IE protein is a multifunctional protein capable of migrating to the nucleus, binding to DNA, trans-activating other viral genes, and autoregulating its own synthesis. This is Major viral transcription factor ICP4 homolog (IE) from Equus caballus (Horse).